A 389-amino-acid polypeptide reads, in one-letter code: Ecto-ADP-ribosyltransferase 3 (389 aa).

The signal sequence occupies residues 1–26; sequence MKTGHFEIVTMLLATMILVDIFQVKA. The cysteines at positions 43 and 256 are disulfide-linked. The TR mART core domain occupies 64–251; it reads QQLDTVWENA…LILQSINKTC (188 aa). The NAD(+) site is built by Tyr101 and Arg163. Asn248 carries N-linked (GlcNAc...) asparagine glycosylation. 3 repeat units span residues 283–292, 293–302, and 303–312. Residues 283–312 form a 3 X 10 AA tandem repeats of [GS]-E-K-N-[QW]-K-L-E-D-H region; the sequence is GEKNQKLEDHSEKNWKLEDHGEKNQKLEDH. The interval 325–362 is disordered; it reads MKIPEPFPLPEDKSQGNINNPTPGPVPVPGPKSHPSAS. A glycan (O-linked (GalNAc...) threonine) is linked at Thr346. A compositionally biased stretch (pro residues) spans 346-356; sequence TPGPVPVPGPK. The GPI-anchor amidated serine moiety is linked to residue Ser362. Residues 363–389 constitute a propeptide, removed in mature form; sequence SGKLLLPQFGMVIILISVSAINLFVAL.

This sequence belongs to the Arg-specific ADP-ribosyltransferase family. In terms of processing, O-glycosylated with core 1 or possibly core 8 glycans. As to expression, testis specific.

The protein resides in the cell membrane. It catalyses the reaction L-arginyl-[protein] + NAD(+) = N(omega)-(ADP-D-ribosyl)-L-arginyl-[protein] + nicotinamide + H(+). The protein is Ecto-ADP-ribosyltransferase 3 (ART3) of Homo sapiens (Human).